Consider the following 994-residue polypeptide: ASI1-immunoprecipitated protein 2 (994 aa).

Disordered stretches follow at residues 39–182 (AEFS…SGEN) and 187–206 (KADE…NDPE). Positions 45–54 (KSDESSDENS) are enriched in basic and acidic residues. The segment covering 60-102 (SQCSFNGDNLLRSSGVNAPGSSHNTSSEASHLVNSNHDTSSEN) has biased composition (polar residues). Basic and acidic residues-rich tracts occupy residues 119–140 (LLDR…DHQA) and 148–163 (KVKE…EKKN). A PHD-type zinc finger spans residues 212–263 (VKVCDTCGDAGREDLLAICSRCSDGAEHTYCMRVMLKKVPKGYWLCEECKFA). C215, C218, C230, C233, H239, C242, C257, and C260 together coordinate Zn(2+). 2 disordered regions span residues 342–567 (AHYS…NNKG) and 839–875 (CSNP…TDRT). Residues 371–384 (SFLKSNSFNSLSSR) show a composition bias toward low complexity. 2 stretches are compositionally biased toward polar residues: residues 417–435 (VGKS…NCND) and 449–464 (TEAN…NSSI). 3 stretches are compositionally biased toward basic and acidic residues: residues 469–478 (SPRDLKDLQS), 536–552 (PRSR…KDAV), and 858–875 (DTFR…TDRT).

Component of the ASI1-AIPP1-EDM2 (AAE) RNA regulatory complex composed of at least AIPP1/EDM3, ASI1 and EDM2 and may contain CPL2, AIPP2 and AIPP3/BDT1. Part of the BAH-PHD bivalent histone reader complex that contains AIPP2, PAIPP2 and AIPP3/BDT1; the BAH-PHD module associates with CPL2 to form the BAH-PHD-CPL2 complex (BPC) for transcriptional repression. Binds directly to ASI1, AIPP3/BDT1 and CPL2 but not to PAIPP2. Expressed ubiquitously.

Functionally, together with AIPP3/BDT1 and PAIPP2, cooperates to form a BAH-PHD bivalent histone reader complex able to read histone H3 lysine 27 trimethylation (H3K27me3) and low-methylated H3K4 histone marks in order to regulate transcription, especially to prevent early flowering; promotes AIPP3/BDT1 binding to H3K27me3. CPL2 is subsequently recruited to form a BAH-PHD-CPL2 complex (BPC) in order to silence several H3K27me3 and low-methylated H3K4 enriched loci, including AGO5, via the phosphorylation state-dependent inhibition of Pol II release from the transcriptional start site (e.g. Ser5P-Pol II dephosphorylation). The BPC complex represses flowering by inhibiting the expression of several genes, including AGL6, FT, FUL and SOC1. Prevents the accumulation of intronic heterochromatin-containing genes (e.g. IBM1, At3g05410 and RPP7). The protein is ASI1-immunoprecipitated protein 2 of Arabidopsis thaliana (Mouse-ear cress).